Here is a 491-residue protein sequence, read N- to C-terminus: UDP-N-acetylmuramate--L-alanine ligase (491 aa).

Residue 126-132 (GTHGKTT) participates in ATP binding.

This sequence belongs to the MurCDEF family.

It localises to the cytoplasm. It carries out the reaction UDP-N-acetyl-alpha-D-muramate + L-alanine + ATP = UDP-N-acetyl-alpha-D-muramoyl-L-alanine + ADP + phosphate + H(+). The protein operates within cell wall biogenesis; peptidoglycan biosynthesis. Its function is as follows. Cell wall formation. The sequence is that of UDP-N-acetylmuramate--L-alanine ligase from Salmonella paratyphi C (strain RKS4594).